A 317-amino-acid chain; its full sequence is Olfactory receptor 51Q1 (317 aa).

Topologically, residues 1–27 are extracellular; the sequence is MSQVTNTTQEGIYFILTDIPGFEASHI. N-linked (GlcNAc...) asparagine glycosylation occurs at asparagine 6. A helical transmembrane segment spans residues 28–48; sequence WISIPVCCLYTISIMGNTTIL. The Cytoplasmic portion of the chain corresponds to 49–56; the sequence is TVIRTEPS. A helical membrane pass occupies residues 57 to 77; the sequence is VHQRMYLFLSMLALTDLGLTL. Residues 78 to 101 are Extracellular-facing; sequence TTLPTVMQLLWFNVRRISSEACFA. Cysteine 99 and cysteine 191 are disulfide-bonded. The chain crosses the membrane as a helical span at residues 102–122; sequence QFFFLHGFSFMESSVLLAMSV. Residues 123–141 are Cytoplasmic-facing; sequence DCYVAICCPLHYASILTNE. Residues 142-162 form a helical membrane-spanning segment; it reads VIGRTGLAIICCCVLAVLPSL. Residues 163 to 198 are Extracellular-facing; sequence FLLKRLPFCHSHLLSRSYCLHQDMIRLVCADIRLNS. The chain crosses the membrane as a helical span at residues 199–219; sequence WYGFALALLIIIVDPLLIVIS. Residues 220 to 239 are Cytoplasmic-facing; that stretch reads YTLILKNILGTATWAERLRA. A helical membrane pass occupies residues 240–260; it reads LNNCLSHILAVLVLYIPMVGV. Residues 261–275 are Extracellular-facing; the sequence is SMTHRFAKHASPLVH. Residues 276–296 form a helical membrane-spanning segment; that stretch reads VIMANIYLLAPPVMNPIIYSV. The Cytoplasmic portion of the chain corresponds to 297–317; it reads KNKQIQWGMLNFLSLKNMHSR.

Belongs to the G-protein coupled receptor 1 family.

The protein localises to the cell membrane. Odorant receptor. The protein is Olfactory receptor 51Q1 (OR51Q1) of Homo sapiens (Human).